Here is a 784-residue protein sequence, read N- to C-terminus: Cation/H(+) antiporter 26 (784 aa).

11 consecutive transmembrane segments (helical) span residues Pro-38–Leu-58, Leu-61–Leu-81, Tyr-97–Ala-117, Leu-130–Cys-150, Leu-201–Ile-221, Phe-240–Ile-260, Thr-286–Val-306, Ile-321–Val-341, Ile-351–Leu-371, Phe-376–Tyr-396, and Glu-413–Val-433.

It belongs to the monovalent cation:proton antiporter 2 (CPA2) transporter (TC 2.A.37) family. CHX (TC 2.A.37.4) subfamily. In terms of tissue distribution, expressed in pollen.

The protein localises to the membrane. Functionally, may operate as a cation/H(+) antiporter. In Arabidopsis thaliana (Mouse-ear cress), this protein is Cation/H(+) antiporter 26 (CHX26).